The primary structure comprises 360 residues: Peptide chain release factor 1 (360 aa).

Q235 is subject to N5-methylglutamine.

Belongs to the prokaryotic/mitochondrial release factor family. Post-translationally, methylated by PrmC. Methylation increases the termination efficiency of RF1.

It localises to the cytoplasm. Its function is as follows. Peptide chain release factor 1 directs the termination of translation in response to the peptide chain termination codons UAG and UAA. This chain is Peptide chain release factor 1, found in Burkholderia thailandensis (strain ATCC 700388 / DSM 13276 / CCUG 48851 / CIP 106301 / E264).